The primary structure comprises 280 residues: ESX-1 secretion-associated protein EspJ (280 aa).

A Phosphoserine modification is found at Ser70. Composition is skewed to low complexity over residues 167 to 181 (QTISQTAQQAAQSAQ) and 246 to 280 (PAQAMDTGAGARPAASPLAAPVDPSTPAPSTTTTL). A disordered region spans residues 167 to 280 (QTISQTAQQA…TPAPSTTTTL (114 aa)).

In terms of assembly, residues 76-280 interact with EsxB and an artificial EsxB-EsxA heterodimer. In terms of processing, phosphorylated at Ser-70.

Its subcellular location is the secreted. Its function is as follows. Could be involved in regulation of growth and intracellular survival. The chain is ESX-1 secretion-associated protein EspJ from Mycobacterium tuberculosis (strain ATCC 25618 / H37Rv).